Consider the following 3748-residue polypeptide: Intermembrane lipid transfer protein VPS13C (3748 aa).

Residues 3–115 (LESVVADLLN…SLQDIKQKEL (113 aa)) form the Chorein N-terminal domain. A Phosphoserine modification is found at serine 132. Residue threonine 613 is modified to Phosphothreonine. Position 618 is a phosphoserine (serine 618). Threonine 623 is subject to Phosphothreonine. A phosphoserine mark is found at serine 736, serine 841, serine 871, and serine 873. An FFAT motif is present at residues 876–882 (EFFDAED). Threonine 1968 carries the phosphothreonine modification. Phosphoserine occurs at positions 1974 and 2442. A required for late endosome/lysosome localization region spans residues 2410-3304 (DYSLKDRAPF…IQQDIDALNT (895 aa)). The SHR-BD domain occupies 2760 to 3012 (ELSVFSPYWL…LFAWADPTGI (253 aa)). Residues 3305–3748 (ELMESSMTDM…VKLLRPQGPS (444 aa)) are required for lipid droplet localization. Residues arginine 3514 and arginine 3521 each carry the omega-N-methylarginine modification. At lysine 3533 the chain carries N6-acetyllysine.

It belongs to the VPS13 family.

It is found in the mitochondrion outer membrane. The protein localises to the lipid droplet. Its subcellular location is the endoplasmic reticulum membrane. It localises to the lysosome membrane. The protein resides in the late endosome membrane. Mediates the transfer of lipids between membranes at organelle contact sites. Necessary for proper mitochondrial function and maintenance of mitochondrial transmembrane potential. Involved in the regulation of PINK1/PRKN-mediated mitophagy in response to mitochondrial depolarization. The chain is Intermembrane lipid transfer protein VPS13C from Mus musculus (Mouse).